Consider the following 198-residue polypeptide: HTH-type transcriptional regulator BetI (198 aa).

One can recognise an HTH tetR-type domain in the interval 8–68; the sequence is PIRRQQLIDA…ATMRYLISHL (61 aa). Residues 31–50 constitute a DNA-binding region (H-T-H motif); it reads TIAQIARRAGVSNGIISHYF.

The protein operates within amine and polyamine biosynthesis; betaine biosynthesis via choline pathway [regulation]. Functionally, repressor involved in the biosynthesis of the osmoprotectant glycine betaine. It represses transcription of the choline transporter BetT and the genes of BetAB involved in the synthesis of glycine betaine. This Serratia proteamaculans (strain 568) protein is HTH-type transcriptional regulator BetI.